A 315-amino-acid polypeptide reads, in one-letter code: Ribosomal RNA small subunit methyltransferase H (315 aa).

Residues 35–37 (GGH), aspartate 55, phenylalanine 80, aspartate 102, and glutamine 109 each bind S-adenosyl-L-methionine.

It belongs to the methyltransferase superfamily. RsmH family.

It localises to the cytoplasm. It catalyses the reaction cytidine(1402) in 16S rRNA + S-adenosyl-L-methionine = N(4)-methylcytidine(1402) in 16S rRNA + S-adenosyl-L-homocysteine + H(+). In terms of biological role, specifically methylates the N4 position of cytidine in position 1402 (C1402) of 16S rRNA. This is Ribosomal RNA small subunit methyltransferase H from Shewanella halifaxensis (strain HAW-EB4).